The sequence spans 508 residues: Mitochondrial distribution and morphology protein 10 (508 aa).

The tract at residues 160 to 195 (PAHPTSTRPTPPQTPPSHTRQPSEPSTPAPSPTPGN) is disordered.

Belongs to the MDM10 family. As to quaternary structure, component of the ER-mitochondria encounter structure (ERMES) or MDM complex, composed of MMM1, MDM10, MDM12 and MDM34. Associates with the mitochondrial outer membrane sorting assembly machinery SAM(core) complex.

It is found in the mitochondrion outer membrane. Component of the ERMES/MDM complex, which serves as a molecular tether to connect the endoplasmic reticulum and mitochondria. Components of this complex are involved in the control of mitochondrial shape and protein biogenesis and may function in phospholipid exchange. MDM10 is involved in the late assembly steps of the general translocase of the mitochondrial outer membrane (TOM complex). Functions in the TOM40-specific route of the assembly of outer membrane beta-barrel proteins, including the association of TOM40 with the receptor TOM22 and small TOM proteins. Can associate with the SAM(core) complex as well as the MDM12-MMM1 complex, both involved in late steps of the major beta-barrel assembly pathway, that is responsible for biogenesis of all outer membrane beta-barrel proteins. May act as a switch that shuttles between both complexes and channels precursor proteins into the TOM40-specific pathway. Plays a role in mitochondrial morphology and in the inheritance of mitochondria. This chain is Mitochondrial distribution and morphology protein 10, found in Cryptococcus neoformans var. neoformans serotype D (strain B-3501A) (Filobasidiella neoformans).